Consider the following 386-residue polypeptide: Mannitol-1-phosphate 5-dehydrogenase (386 aa).

3–14 (AVHFGAGNIGRG) lines the NAD(+) pocket.

The protein belongs to the mannitol dehydrogenase family.

It catalyses the reaction D-mannitol 1-phosphate + NAD(+) = beta-D-fructose 6-phosphate + NADH + H(+). This is Mannitol-1-phosphate 5-dehydrogenase from Brevibacillus brevis (strain 47 / JCM 6285 / NBRC 100599).